The chain runs to 249 residues: UDP-2,3-diacylglucosamine hydrolase (249 aa).

The Mn(2+) site is built by aspartate 7, histidine 9, aspartate 40, asparagine 78, and histidine 113. 78 to 79 (NR) lines the substrate pocket. Positions 121, 159, 163, 166, and 194 each coordinate substrate. Mn(2+)-binding residues include histidine 194 and histidine 196.

The protein belongs to the LpxH family. The cofactor is Mn(2+).

Its subcellular location is the cell inner membrane. It catalyses the reaction UDP-2-N,3-O-bis[(3R)-3-hydroxytetradecanoyl]-alpha-D-glucosamine + H2O = 2-N,3-O-bis[(3R)-3-hydroxytetradecanoyl]-alpha-D-glucosaminyl 1-phosphate + UMP + 2 H(+). It functions in the pathway glycolipid biosynthesis; lipid IV(A) biosynthesis; lipid IV(A) from (3R)-3-hydroxytetradecanoyl-[acyl-carrier-protein] and UDP-N-acetyl-alpha-D-glucosamine: step 4/6. Functionally, hydrolyzes the pyrophosphate bond of UDP-2,3-diacylglucosamine to yield 2,3-diacylglucosamine 1-phosphate (lipid X) and UMP by catalyzing the attack of water at the alpha-P atom. Involved in the biosynthesis of lipid A, a phosphorylated glycolipid that anchors the lipopolysaccharide to the outer membrane of the cell. The sequence is that of UDP-2,3-diacylglucosamine hydrolase from Pseudomonas fluorescens (strain SBW25).